A 315-amino-acid polypeptide reads, in one-letter code: Type II restriction enzyme AvaI (315 aa).

It carries out the reaction Endonucleolytic cleavage of DNA to give specific double-stranded fragments with terminal 5'-phosphates.. Its function is as follows. A P subtype restriction enzyme that recognizes the double-stranded sequence 5'-CYCGRG-3' and cleaves after C-1. This Anabaena variabilis protein is Type II restriction enzyme AvaI.